Consider the following 967-residue polypeptide: Leucine-rich repeat receptor-like protein kinase PXC2 (967 aa).

The N-terminal stretch at Met1–Ala20 is a signal peptide. Over Asp21–Ser609 the chain is Extracellular. 11 LRR repeats span residues Leu91–His114, Leu115–Gln139, Gly141–Cys164, Ser165–Lys189, Leu191–Leu212, Asp214–Cys236, Ser237–Leu260, Ser262–Ile284, Ala285–Asn307, Leu308–Cys332, and Asn334–Gly356. Residues Asn103 and Asn127 are each glycosylated (N-linked (GlcNAc...) asparagine). N-linked (GlcNAc...) asparagine glycosylation occurs at Asn171. N-linked (GlcNAc...) asparagine glycosylation occurs at Asn219. N-linked (GlcNAc...) asparagine glycans are attached at residues Asn296, Asn315, and Asn331. An N-linked (GlcNAc...) asparagine glycan is attached at Asn374. 7 LRR repeats span residues Leu384–Leu408, Ser410–Leu432, Lys433–Ala456, Val457–Cys480, Ala482–Ser503, Leu504–Leu528, and His530–Asn552. N-linked (GlcNAc...) asparagine glycans are attached at residues Asn415, Asn446, Asn479, Asn487, Asn516, Asn535, Asn540, Asn571, and Asn587. A helical transmembrane segment spans residues Ala610 to Leu630. The Cytoplasmic portion of the chain corresponds to Asn631–Glu967. One can recognise a Protein kinase domain in the interval Leu687–Ile959. ATP is bound by residues Leu693–Val701 and Lys715.

It belongs to the protein kinase superfamily. Ser/Thr protein kinase family. In terms of tissue distribution, expressed in the vascular strands of cotyledons, the shoot apex, hypocotyls, roots, leaves, stems and flowers.

It localises to the cell membrane. Its function is as follows. Leucine-rich repeat receptor-like protein kinase that may play a role in vascular tissues development. In Arabidopsis thaliana (Mouse-ear cress), this protein is Leucine-rich repeat receptor-like protein kinase PXC2.